A 113-amino-acid chain; its full sequence is UPF0145 protein MTH_544 (113 aa).

Belongs to the UPF0145 family.

This is UPF0145 protein MTH_544 from Methanothermobacter thermautotrophicus (strain ATCC 29096 / DSM 1053 / JCM 10044 / NBRC 100330 / Delta H) (Methanobacterium thermoautotrophicum).